The following is a 1020-amino-acid chain: Non-canonical nonribosomal peptide synthetase hkm10 (1020 aa).

Residues 21–419 (QMLEDPDAIA…GRFDHQVKIR (399 aa)) form an adenylation (A) domain region. The region spanning 526–608 (QDKVPSEGAS…QLAHIVDRNQ (83 aa)) is the Carrier domain. Residue S568 is modified to O-(pantetheine 4'-phosphoryl)serine. The segment at 652-894 (LTGATGFVGA…FVPIDYVTST (243 aa)) is short-chain dehydrogenase/reductase (R) domain.

Belongs to the NRP synthetase family.

It participates in secondary metabolite biosynthesis. Functionally, non-canonical nonribosomal peptide synthetase; part of the gene cluster that mediates the biosynthesis of hancockiamides, an unusual new family of N-cinnamoylated piperazines. The NRPS hkm10 and the NmrA-like reductase hkm9 are proposed to convert two molecules of L-Phe to the intermediary piperazine called xenocockiamide A. Xenocockiamide A is then converted to hancockiamide D via a series of hydroxylations and O-methylations. The tyrosinase hkm6 may catalyze an aromatic hydroxylation, then the 2-oxoglutarate-dependent Fe(II) dioxygenase hkm4 and the FAD-dependent phenol hydroxylase hkm7 may catalyze consecutive hydroxylations to install 2 more hydroxy groups, and the methyltransferase hkm8 probably catalyzes two methylations using 2 molecules of S-adenosyl-L-methionine (SAM). The NRPS hkm11 activates and transfers trans-cinnamate supplied by the PAL hkm12 to hancockiamide D and produces hancockiamide A. NRPS Hkm11 has the flexibility to tolerate the bulky hancockiamide G as a substrate and the absence of the acetyl-transferase hkm3 opens up the opportunity for hkm11 to introduce a second N-cinnamoyl moiety. The cytochrome P450 monooxygenase hkm5 catalyzes the methylenedioxy bridge formation, converting hancockiamide A into hancockiamide G. Hkm5 can also convert hancockiamide B into hancockiamide C, and hancockiamide D into hancockiamide H. The N-acetyltransferase hkm3 finally transfers an acetyl group to 1-N of piperazine, converting hancockiamide A into hancockiamide B and hancockiamide G into hancockiamide C. The sequence is that of Non-canonical nonribosomal peptide synthetase hkm10 from Aspergillus hancockii.